The chain runs to 321 residues: MDRGRCANMLKSLQRTLAKCQKSPSTNHWQCFKRNFTSIRATKYPGRSNSTFHYWPWFAASTLLATSLYYRDRPVQNDDKTDAFPSHTESIQVDSSVSDFPLTITALNFPVSTTFKLLGYGQRHVTFLRFKVYALGLYLAENDENLVSDTLNETYLHKYFLDVDDSKTPKENLARLLKRDDSKSVMMIDDLLDSGMRMLAKITPVRNTDFKHLKEGLVKTISKHPDVANNKDTLAKGLSELNDAFSRKGSVRKNDDLIIELLANGALQFSYHDSKNNEFEVMGVVNNQLVGKFLFSQYLCGEKSPSPQAKKTTIDKLITLL.

The transit peptide at Met-1–Asp-72 directs the protein to the mitochondrion.

Belongs to the AIM18/AIM46 family.

Its subcellular location is the mitochondrion. The polypeptide is Altered inheritance of mitochondria protein 18, mitochondrial (AIM18) (Saccharomyces cerevisiae (strain AWRI1631) (Baker's yeast)).